Reading from the N-terminus, the 164-residue chain is Nucleotide-binding protein Helmi_22490 (164 aa).

The protein belongs to the YajQ family.

Functionally, nucleotide-binding protein. The protein is Nucleotide-binding protein Helmi_22490 of Heliobacterium modesticaldum (strain ATCC 51547 / Ice1).